Reading from the N-terminus, the 284-residue chain is RAD52 motif-containing protein 1 (284 aa).

The segment at methionine 1 to lysine 92 is necessary for nuclear localization and for nucleolar accumulation in response to heat shock. Residues lysine 15–arginine 98 form the RRM domain. The segment at proline 90–lysine 133 is necessary for nuclear and nucleolar localization.

Homodimer. As to expression, expressed in testis.

It is found in the nucleus. The protein localises to the cytoplasm. The protein resides in the nucleolus. Its subcellular location is the PML body. It localises to the cajal body. Functionally, may confer resistance to the antitumor agent cisplatin. Binds to DNA and RNA. The polypeptide is RAD52 motif-containing protein 1 (RDM1) (Homo sapiens (Human)).